The following is a 182-amino-acid chain: Ribosome maturation factor RimM (182 aa).

A PRC barrel domain is found at 103-182 (EDEFYWRELF…RIEVDWDPGF (80 aa)).

The protein belongs to the RimM family. As to quaternary structure, binds ribosomal protein uS19.

It is found in the cytoplasm. An accessory protein needed during the final step in the assembly of 30S ribosomal subunit, possibly for assembly of the head region. Essential for efficient processing of 16S rRNA. May be needed both before and after RbfA during the maturation of 16S rRNA. It has affinity for free ribosomal 30S subunits but not for 70S ribosomes. This chain is Ribosome maturation factor RimM, found in Vibrio campbellii (strain ATCC BAA-1116).